A 112-amino-acid polypeptide reads, in one-letter code: MYSQSMVLLAAAFASFVAASPMALHGANSCSTGPVHCCNSVEHHTQPHANSLARGSGLVGLDIETLVGNIGLDCSPIGLSSTDCTAQTVCCDDVTFDGKVAVGCTPVNLSVL.

The N-terminal stretch at 1–19 (MYSQSMVLLAAAFASFVAA) is a signal peptide. Intrachain disulfides connect C30–C90, C37–C84, C38–C74, and C91–C104. Residue N108 is glycosylated (N-linked (GlcNAc...) asparagine).

This sequence belongs to the fungal hydrophobin family. As to quaternary structure, self-assembles to form functional amyloid fibrils called rodlets. Self-assembly into fibrillar rodlets occurs spontaneously at hydrophobic:hydrophilic interfaces and the rodlets further associate laterally to form amphipathic monolayers.

The protein localises to the secreted. Its subcellular location is the cell wall. In terms of biological role, aerial growth, conidiation, and dispersal of filamentous fungi in the environment rely upon a capability of their secreting small amphipathic proteins called hydrophobins (HPBs) with low sequence identity. Class I can self-assemble into an outermost layer of rodlet bundles on aerial cell surfaces, conferring cellular hydrophobicity that supports fungal growth, development and dispersal; whereas Class II form highly ordered films at water-air interfaces through intermolecular interactions but contribute nothing to the rodlet structure. Hydph17 is a class I hydrophobin involved in mycelial growth. This chain is Class I hydrophobin 17, found in Pleurotus ostreatus (strain PC15) (Oyster mushroom).